The chain runs to 491 residues: Ketol-acid reductoisomerase (NADP(+)) (491 aa).

The KARI N-terminal Rossmann domain occupies 15–208 (AQLGKCRFMG…GGHRAGVLES (194 aa)). NADP(+) contacts are provided by residues 45–48 (CGAQ), arginine 68, arginine 76, serine 78, and 108–110 (DKQ). Residue histidine 132 is part of the active site. Glycine 158 serves as a coordination point for NADP(+). KARI C-terminal knotted domains are found at residues 209-344 (SFVA…TAPQ) and 345-484 (FEGK…MTDM). Residues aspartate 217, glutamate 221, glutamate 389, and glutamate 393 each contribute to the Mg(2+) site. Serine 414 provides a ligand contact to substrate.

This sequence belongs to the ketol-acid reductoisomerase family. It depends on Mg(2+) as a cofactor.

It catalyses the reaction (2R)-2,3-dihydroxy-3-methylbutanoate + NADP(+) = (2S)-2-acetolactate + NADPH + H(+). The enzyme catalyses (2R,3R)-2,3-dihydroxy-3-methylpentanoate + NADP(+) = (S)-2-ethyl-2-hydroxy-3-oxobutanoate + NADPH + H(+). It participates in amino-acid biosynthesis; L-isoleucine biosynthesis; L-isoleucine from 2-oxobutanoate: step 2/4. It functions in the pathway amino-acid biosynthesis; L-valine biosynthesis; L-valine from pyruvate: step 2/4. Involved in the biosynthesis of branched-chain amino acids (BCAA). Catalyzes an alkyl-migration followed by a ketol-acid reduction of (S)-2-acetolactate (S2AL) to yield (R)-2,3-dihydroxy-isovalerate. In the isomerase reaction, S2AL is rearranged via a Mg-dependent methyl migration to produce 3-hydroxy-3-methyl-2-ketobutyrate (HMKB). In the reductase reaction, this 2-ketoacid undergoes a metal-dependent reduction by NADPH to yield (R)-2,3-dihydroxy-isovalerate. The chain is Ketol-acid reductoisomerase (NADP(+)) from Salmonella schwarzengrund (strain CVM19633).